Consider the following 251-residue polypeptide: Astacin (251 aa).

Residues 1 to 15 (MQCAVLLVLLGVVAA) form the signal peptide. The propeptide at 16–49 (SPIIPEAARALYYNDGMFEGDIKLRAGRQPARVG) is activation peptide. The 199-residue stretch at 50–248 (AAILGDEYLW…INNLYTNECS (199 aa)) folds into the Peptidase M12A domain. 2 disulfides stabilise this stretch: Cys-91/Cys-247 and Cys-113/Cys-133. Residue His-141 participates in Zn(2+) binding. The active site involves Glu-142. The Zn(2+) site is built by His-145 and His-151. The propeptide occupies 250-251 (RH).

Monomer. Zn(2+) is required as a cofactor.

It carries out the reaction Hydrolysis of peptide bonds in substrates containing five or more amino acids, preferentially with Ala in P1', and Pro in P2'.. Metalloprotease. This protease prefers to cleave in front of small aliphatic residues (P1'). The presence of Lys or Arg in the P1 and P2 position yields high-turnover substrates. In the P3 position the enzyme prefers Pro &gt; Val &gt; Leu &gt; Ala &gt; Gly. In Astacus astacus (Noble crayfish), this protein is Astacin.